Here is a 396-residue protein sequence, read N- to C-terminus: Flavohemoprotein (396 aa).

Residues 1-136 enclose the Globin domain; sequence MLDTQTIAIV…LADVFIQRES (136 aa). Position 85 (His-85) interacts with heme b. Residues Tyr-95 and Glu-135 each act as charge relay system in the active site. Residues 147 to 396 are reductase; sequence GGWRTLRRFR…YECFGPHKVI (250 aa). Residues 150–255 form the FAD-binding FR-type domain; sequence RTLRRFRIIK…APPRGDFFLD (106 aa). Residues Tyr-188 and 204 to 207 contribute to the FAD site; that span reads RQYS. 268–273 provides a ligand contact to NADP(+); it reads GVGQTP. Position 389-392 (389-392) interacts with FAD; it reads CFGP.

Belongs to the globin family. Two-domain flavohemoproteins subfamily. This sequence in the C-terminal section; belongs to the flavoprotein pyridine nucleotide cytochrome reductase family. Heme b serves as cofactor. Requires FAD as cofactor.

It catalyses the reaction 2 nitric oxide + NADPH + 2 O2 = 2 nitrate + NADP(+) + H(+). The enzyme catalyses 2 nitric oxide + NADH + 2 O2 = 2 nitrate + NAD(+) + H(+). Its function is as follows. Is involved in NO detoxification in an aerobic process, termed nitric oxide dioxygenase (NOD) reaction that utilizes O(2) and NAD(P)H to convert NO to nitrate, which protects the bacterium from various noxious nitrogen compounds. Therefore, plays a central role in the inducible response to nitrosative stress. This is Flavohemoprotein from Yersinia pestis.